The primary structure comprises 99 residues: RNA-binding protein Hfq (99 aa).

The Sm domain maps to 9–68 (DPFLNALRRERVPVSIYLVNGIKLQGQIESFDQFVILLKNTVSQMVYKHAISTVVPSRPV). The tract at residues 64-99 (PSRPVSHHSNNPGGGSNYHGNNTAASQQSQEADDAE) is disordered.

The protein belongs to the Hfq family. In terms of assembly, homohexamer.

In terms of biological role, RNA chaperone that binds small regulatory RNA (sRNAs) and mRNAs to facilitate mRNA translational regulation in response to envelope stress, environmental stress and changes in metabolite concentrations. Also binds with high specificity to tRNAs. The protein is RNA-binding protein Hfq of Pectobacterium carotovorum subsp. carotovorum (strain PC1).